The sequence spans 693 residues: Glycine--tRNA ligase beta subunit (693 aa).

It belongs to the class-II aminoacyl-tRNA synthetase family. Tetramer of two alpha and two beta subunits.

The protein localises to the cytoplasm. The catalysed reaction is tRNA(Gly) + glycine + ATP = glycyl-tRNA(Gly) + AMP + diphosphate. This chain is Glycine--tRNA ligase beta subunit, found in Shouchella clausii (strain KSM-K16) (Alkalihalobacillus clausii).